Consider the following 393-residue polypeptide: MKKIVLAYSGGLDTSVILKWLQENYNCEVVVFTADLGQDDDMSVIRQKATALNVKEIFIEDLKEEFVKDFVFPMFRANTVYEGYYLLGTSIARPLIAKRQIEIAKLTGADTVAHGATGKGNDQIRFEFGYYCCNPNIKVIAPWRQWKLTSRNSLIEYAKKHGINVPLDKSSEPPYSIDANLLHTSYEGKSLEDPYVEPDYTILSKSVTPELASDTPEYIEISFEKGDPCAINNIPLSPANLLKQLNTIGGKHGIGIIDIVENRYVGIKSRGIYETPGGTILLHAHRAIESITLDREAAHLKDEIMPKYAKLIYNGYWWTTERKMLQALIDRSQEKVNGVVRLKLYKGSVIVVGRKSENSLYSHNLASFDLSEDYNHTDAEGFIKINSLRLRNC.

Residues 7–15 (AYSGGLDTS) and A34 each bind ATP. L-citrulline-binding residues include Y85 and S90. G115 is an ATP binding site. 3 residues coordinate L-aspartate: T117, N121, and D122. L-citrulline is bound at residue N121. L-citrulline contacts are provided by R125, S176, S185, E261, and Y273.

It belongs to the argininosuccinate synthase family. Type 1 subfamily. As to quaternary structure, homotetramer.

It is found in the cytoplasm. The catalysed reaction is L-citrulline + L-aspartate + ATP = 2-(N(omega)-L-arginino)succinate + AMP + diphosphate + H(+). The protein operates within amino-acid biosynthesis; L-arginine biosynthesis; L-arginine from L-ornithine and carbamoyl phosphate: step 2/3. The chain is Argininosuccinate synthase from Ehrlichia canis (strain Jake).